The primary structure comprises 226 residues: uncharacterized protein (226 aa).

This is an uncharacterized protein from Haemophilus influenzae (strain ATCC 51907 / DSM 11121 / KW20 / Rd).